The primary structure comprises 319 residues: ATP-dependent 6-phosphofructokinase (319 aa).

Gly-11 provides a ligand contact to ATP. 21 to 25 (RAVVR) lines the ADP pocket. Residues 72 to 73 (RS) and 102 to 105 (GDGS) each bind ATP. A Mg(2+)-binding site is contributed by Asp-103. 125–127 (TID) is a binding site for substrate. The active-site Proton acceptor is Asp-127. Residue Arg-154 participates in ADP binding. Substrate contacts are provided by residues Arg-162 and 169-171 (MGR). Residues 185–187 (GAE), Arg-211, and 213–215 (KKH) contribute to the ADP site. Residues Glu-222, Arg-243, and 249–252 (HIQR) each bind substrate.

It belongs to the phosphofructokinase type A (PFKA) family. ATP-dependent PFK group I subfamily. Prokaryotic clade 'B1' sub-subfamily. As to quaternary structure, homotetramer. Requires Mg(2+) as cofactor.

It is found in the cytoplasm. The catalysed reaction is beta-D-fructose 6-phosphate + ATP = beta-D-fructose 1,6-bisphosphate + ADP + H(+). It participates in carbohydrate degradation; glycolysis; D-glyceraldehyde 3-phosphate and glycerone phosphate from D-glucose: step 3/4. With respect to regulation, allosterically activated by ADP and other diphosphonucleosides, and allosterically inhibited by phosphoenolpyruvate. Its function is as follows. Catalyzes the phosphorylation of D-fructose 6-phosphate to fructose 1,6-bisphosphate by ATP, the first committing step of glycolysis. The polypeptide is ATP-dependent 6-phosphofructokinase (Oceanobacillus iheyensis (strain DSM 14371 / CIP 107618 / JCM 11309 / KCTC 3954 / HTE831)).